A 466-amino-acid chain; its full sequence is 3-isopropylmalate dehydratase large subunit (466 aa).

Positions 347, 407, and 410 each coordinate [4Fe-4S] cluster.

Belongs to the aconitase/IPM isomerase family. LeuC type 1 subfamily. In terms of assembly, heterodimer of LeuC and LeuD. It depends on [4Fe-4S] cluster as a cofactor.

It catalyses the reaction (2R,3S)-3-isopropylmalate = (2S)-2-isopropylmalate. It functions in the pathway amino-acid biosynthesis; L-leucine biosynthesis; L-leucine from 3-methyl-2-oxobutanoate: step 2/4. In terms of biological role, catalyzes the isomerization between 2-isopropylmalate and 3-isopropylmalate, via the formation of 2-isopropylmaleate. The chain is 3-isopropylmalate dehydratase large subunit from Escherichia coli O17:K52:H18 (strain UMN026 / ExPEC).